The sequence spans 359 residues: SAGA complex subunit Spt7 (359 aa).

As to quaternary structure, component of the Spt-Ada-Gcn5 acetyltransferase (SAGA) complex consisting of wda/Taf5L, Saf6, Taf9, Taf10b, Taf12, Ada1, Spt3, Spt7, Spt20, Sf3b3, Sf3b5, Nipped-A/Tra1, a histone acetyltransferase (HAT) module made up of Gcn5, Ada2b (Isoform B), Ada3 and Sgf29, and a deubiquitinase (DUB) module made up of not/nonstop, Sgf11 and e(y)2 tethered to SAGA by Atxn7. Interacts with Ada2b; the interaction is direct.

It is found in the nucleus. In terms of biological role, component of the transcription regulatory complex SAGA, a multiprotein complex that activates transcription by remodeling chromatin and mediating histone acetylation and deubiquitination. The SAGA complex predominantly acetylates histone H3. The polypeptide is SAGA complex subunit Spt7 (Drosophila melanogaster (Fruit fly)).